We begin with the raw amino-acid sequence, 428 residues long: Enolase (428 aa).

Gln-162 is a binding site for (2R)-2-phosphoglycerate. Glu-204 (proton donor) is an active-site residue. Mg(2+) contacts are provided by Asp-241, Glu-282, and Asp-309. Positions 334, 363, 364, and 385 each coordinate (2R)-2-phosphoglycerate. Lys-334 (proton acceptor) is an active-site residue.

It belongs to the enolase family. It depends on Mg(2+) as a cofactor.

The protein localises to the cytoplasm. It localises to the secreted. Its subcellular location is the cell surface. It carries out the reaction (2R)-2-phosphoglycerate = phosphoenolpyruvate + H2O. Its pathway is carbohydrate degradation; glycolysis; pyruvate from D-glyceraldehyde 3-phosphate: step 4/5. Catalyzes the reversible conversion of 2-phosphoglycerate (2-PG) into phosphoenolpyruvate (PEP). It is essential for the degradation of carbohydrates via glycolysis. The polypeptide is Enolase (Mycobacterium ulcerans (strain Agy99)).